The chain runs to 122 residues: Large ribosomal subunit protein uL14 (122 aa).

It belongs to the universal ribosomal protein uL14 family. Part of the 50S ribosomal subunit. Forms a cluster with proteins L3 and L19. In the 70S ribosome, L14 and L19 interact and together make contacts with the 16S rRNA in bridges B5 and B8.

In terms of biological role, binds to 23S rRNA. Forms part of two intersubunit bridges in the 70S ribosome. The polypeptide is Large ribosomal subunit protein uL14 (Streptococcus pyogenes serotype M2 (strain MGAS10270)).